The following is a 900-amino-acid chain: Zinc finger protein 574 (900 aa).

3 consecutive C2H2-type zinc fingers follow at residues 16 to 38, 76 to 98, and 126 to 148; these read YVCS…QNSH, YQCL…QELH, and YECV…RQTH. A Phosphoserine modification is found at S164. The segment at 213 to 235 adopts a C2H2-type 4 zinc-finger fold; that stretch reads YKCSECSQLFQMPADFLEHQATH. Residues 244–254 show a composition bias toward low complexity; sequence AEPATQQETQV. The interval 244–306 is disordered; the sequence is AEPATQQETQ…RRNNSGESGG (63 aa). The segment covering 273–290 has biased composition (basic and acidic residues); the sequence is HSYELRNELRNGEAIGRD. S301 carries the phosphoserine modification. C2H2-type zinc fingers lie at residues 312 to 334, 339 to 361, 367 to 389, 395 to 416, 469 to 492, 498 to 520, 526 to 548, 554 to 576, 582 to 604, and 610 to 633; these read LFCS…LRSH, FKCP…LGDH, FLCV…RRAH, HSCP…RRTH, YRCL…RFVH, HKCS…LRTH, FPCP…RLTH, YRCG…RLVH, YRCQ…RYHH, and YKCR…LVIH. Residues 639 to 662 form a C2H2-type 15; degenerate zinc finger; the sequence is YRCSSCGAAFPSSLRLREHRCAAA. The C2H2-type 16 zinc finger occupies 670 to 692; sequence FECGTCGKKVGSAARLQAHEAAH. A disordered region spans residues 690-741; that stretch reads AAHAAAGPGEVLAKEPPAPRASRATRTPVAPSPTALSGTTSAAPAAPARRRG. Phosphoserine is present on S721. Over residues 721–736 the composition is skewed to low complexity; that stretch reads SPTALSGTTSAAPAAP. Phosphothreonine is present on T728. 4 consecutive C2H2-type zinc fingers follow at residues 742 to 764, 770 to 792, 798 to 820, and 826 to 848; these read PECS…RRIH, YPCP…RRLH, FACE…RRIH, and YSCP…RKTH. An Asymmetric dimethylarginine modification is found at R836.

It belongs to the krueppel C2H2-type zinc-finger protein family.

The protein resides in the nucleus. May be involved in transcriptional regulation. This chain is Zinc finger protein 574 (Znf574), found in Mus musculus (Mouse).